Here is a 44-residue protein sequence, read N- to C-terminus: Protein PsbN (44 aa).

The helical transmembrane segment at 6–26 (FFFTIFLWCLLLSVTGYSVYV) threads the bilayer.

Belongs to the PsbN family.

Its subcellular location is the plastid. The protein localises to the chloroplast thylakoid membrane. May play a role in photosystem I and II biogenesis. The chain is Protein PsbN from Oltmannsiellopsis viridis (Marine flagellate).